A 329-amino-acid chain; its full sequence is 4-hydroxythreonine-4-phosphate dehydrogenase (329 aa).

Histidine 136 and threonine 137 together coordinate substrate. A divalent metal cation is bound by residues histidine 166, histidine 211, and histidine 266. Substrate-binding residues include lysine 274, asparagine 283, and arginine 292.

Belongs to the PdxA family. Homodimer. Zn(2+) is required as a cofactor. Requires Mg(2+) as cofactor. It depends on Co(2+) as a cofactor.

Its subcellular location is the cytoplasm. It carries out the reaction 4-(phosphooxy)-L-threonine + NAD(+) = 3-amino-2-oxopropyl phosphate + CO2 + NADH. It functions in the pathway cofactor biosynthesis; pyridoxine 5'-phosphate biosynthesis; pyridoxine 5'-phosphate from D-erythrose 4-phosphate: step 4/5. Functionally, catalyzes the NAD(P)-dependent oxidation of 4-(phosphooxy)-L-threonine (HTP) into 2-amino-3-oxo-4-(phosphooxy)butyric acid which spontaneously decarboxylates to form 3-amino-2-oxopropyl phosphate (AHAP). The polypeptide is 4-hydroxythreonine-4-phosphate dehydrogenase (Escherichia coli (strain K12 / MC4100 / BW2952)).